Here is a 231-residue protein sequence, read N- to C-terminus: Proteasome subunit alpha type-2 (231 aa).

This sequence belongs to the peptidase T1A family. The 26S proteasome consists of a 20S proteasome core and two 19S regulatory subunits. The 20S proteasome core is composed of 28 subunits that are arranged in four stacked rings, resulting in a barrel-shaped structure. The two end rings are each formed by seven alpha subunits, and the two central rings are each formed by seven beta subunits. The catalytic chamber with the active sites is on the inside of the barrel.

It is found in the cytoplasm. Its subcellular location is the nucleus. In terms of biological role, the proteasome is a multicatalytic proteinase complex which is characterized by its ability to cleave peptides with Arg, Phe, Tyr, Leu, and Glu adjacent to the leaving group at neutral or slightly basic pH. The proteasome has an ATP-dependent proteolytic activity. The protein is Proteasome subunit alpha type-2 of Trypanosoma brucei brucei.